Here is a 163-residue protein sequence, read N- to C-terminus: MATDVAVETTMGTFTLELYTNHAPKTCKNFATLADRGYYDSTVFHRIIKDFMIQGGDPTGTGRGGSSIYGEKFEDEIHPGLKHTGAGVLSMANAGPNTNGSQFFITLAPTPWLDGKHTIFGRVKKGMGVIRRMGMVPTDKEDRPATEVKIVKARVVREEDMEA.

The PPIase cyclophilin-type domain maps to 1 to 155; it reads MATDVAVETT…TEVKIVKARV (155 aa).

This sequence belongs to the cyclophilin-type PPIase family. PPIL1 subfamily.

The enzyme catalyses [protein]-peptidylproline (omega=180) = [protein]-peptidylproline (omega=0). PPIases accelerate the folding of proteins. It catalyzes the cis-trans isomerization of proline imidic peptide bonds in oligopeptides. The chain is Peptidyl-prolyl cis-trans isomerase-like 1 (ppi-1) from Neurospora crassa (strain ATCC 24698 / 74-OR23-1A / CBS 708.71 / DSM 1257 / FGSC 987).